We begin with the raw amino-acid sequence, 397 residues long: Elongation factor Tu (397 aa).

A tr-type G domain is found at Lys10–Val207. Residues Gly19–Thr26 are G1. Gly19 to Thr26 provides a ligand contact to GTP. Thr26 contacts Mg(2+). The interval Gly63 to Asn67 is G2. A G3 region spans residues Asp84–Gly87. GTP is bound by residues Asp84–His88 and Asn139–Asp142. The segment at Asn139–Asp142 is G4. Residues Ser177–Leu179 are G5.

It belongs to the TRAFAC class translation factor GTPase superfamily. Classic translation factor GTPase family. EF-Tu/EF-1A subfamily. Monomer.

The protein resides in the cytoplasm. The enzyme catalyses GTP + H2O = GDP + phosphate + H(+). GTP hydrolase that promotes the GTP-dependent binding of aminoacyl-tRNA to the A-site of ribosomes during protein biosynthesis. In Leifsonia xyli subsp. xyli (strain CTCB07), this protein is Elongation factor Tu.